We begin with the raw amino-acid sequence, 417 residues long: NADH-quinone oxidoreductase subunit D (417 aa).

Belongs to the complex I 49 kDa subunit family. In terms of assembly, NDH-1 is composed of 14 different subunits. Subunits NuoB, C, D, E, F, and G constitute the peripheral sector of the complex.

The protein resides in the cell inner membrane. It carries out the reaction a quinone + NADH + 5 H(+)(in) = a quinol + NAD(+) + 4 H(+)(out). In terms of biological role, NDH-1 shuttles electrons from NADH, via FMN and iron-sulfur (Fe-S) centers, to quinones in the respiratory chain. The immediate electron acceptor for the enzyme in this species is believed to be ubiquinone. Couples the redox reaction to proton translocation (for every two electrons transferred, four hydrogen ions are translocated across the cytoplasmic membrane), and thus conserves the redox energy in a proton gradient. This is NADH-quinone oxidoreductase subunit D from Burkholderia multivorans (strain ATCC 17616 / 249).